We begin with the raw amino-acid sequence, 217 residues long: Pyridoxine/pyridoxamine 5'-phosphate oxidase (217 aa).

Substrate is bound by residues 13–16 (RREY) and lysine 71. Residues 66–71 (RIVLLK), 81–82 (YT), arginine 87, lysine 88, and glutamine 110 contribute to the FMN site. Substrate is bound by residues tyrosine 128, arginine 132, and serine 136. FMN-binding positions include 145 to 146 (QS) and tryptophan 190. 196-198 (RLH) lines the substrate pocket. Position 200 (arginine 200) interacts with FMN.

This sequence belongs to the pyridoxamine 5'-phosphate oxidase family. In terms of assembly, homodimer. FMN serves as cofactor.

It catalyses the reaction pyridoxamine 5'-phosphate + O2 + H2O = pyridoxal 5'-phosphate + H2O2 + NH4(+). The enzyme catalyses pyridoxine 5'-phosphate + O2 = pyridoxal 5'-phosphate + H2O2. It participates in cofactor metabolism; pyridoxal 5'-phosphate salvage; pyridoxal 5'-phosphate from pyridoxamine 5'-phosphate: step 1/1. The protein operates within cofactor metabolism; pyridoxal 5'-phosphate salvage; pyridoxal 5'-phosphate from pyridoxine 5'-phosphate: step 1/1. Its function is as follows. Catalyzes the oxidation of either pyridoxine 5'-phosphate (PNP) or pyridoxamine 5'-phosphate (PMP) into pyridoxal 5'-phosphate (PLP). This Photorhabdus laumondii subsp. laumondii (strain DSM 15139 / CIP 105565 / TT01) (Photorhabdus luminescens subsp. laumondii) protein is Pyridoxine/pyridoxamine 5'-phosphate oxidase.